The primary structure comprises 345 residues: tRNA N6-adenosine threonylcarbamoyltransferase (345 aa).

Fe cation is bound by residues His-109 and His-113. Residues 136–140 (TVSGG), Asp-169, Gly-182, Asp-186, and Asn-284 each bind substrate. Residue Asp-312 participates in Fe cation binding.

Belongs to the KAE1 / TsaD family. Fe(2+) is required as a cofactor.

Its subcellular location is the cytoplasm. The enzyme catalyses L-threonylcarbamoyladenylate + adenosine(37) in tRNA = N(6)-L-threonylcarbamoyladenosine(37) in tRNA + AMP + H(+). Functionally, required for the formation of a threonylcarbamoyl group on adenosine at position 37 (t(6)A37) in tRNAs that read codons beginning with adenine. Is involved in the transfer of the threonylcarbamoyl moiety of threonylcarbamoyl-AMP (TC-AMP) to the N6 group of A37, together with TsaE and TsaB. TsaD likely plays a direct catalytic role in this reaction. This Chlorobium phaeovibrioides (strain DSM 265 / 1930) (Prosthecochloris vibrioformis (strain DSM 265)) protein is tRNA N6-adenosine threonylcarbamoyltransferase.